We begin with the raw amino-acid sequence, 395 residues long: S-adenosylmethionine synthase (395 aa).

His16 lines the ATP pocket. Position 18 (Asp18) interacts with Mg(2+). Glu44 contributes to the K(+) binding site. L-methionine contacts are provided by Glu57 and Gln100. The tract at residues 100 to 110 (QSPDIAQGVDD) is flexible loop. Residues 174 to 176 (DAK), 241 to 242 (RF), Asp250, 256 to 257 (RK), Ala273, and Lys277 contribute to the ATP site. L-methionine is bound at residue Asp250. Lys281 lines the L-methionine pocket.

Belongs to the AdoMet synthase family. As to quaternary structure, homotetramer; dimer of dimers. Mg(2+) is required as a cofactor. Requires K(+) as cofactor.

The protein localises to the cytoplasm. It catalyses the reaction L-methionine + ATP + H2O = S-adenosyl-L-methionine + phosphate + diphosphate. It participates in amino-acid biosynthesis; S-adenosyl-L-methionine biosynthesis; S-adenosyl-L-methionine from L-methionine: step 1/1. Functionally, catalyzes the formation of S-adenosylmethionine (AdoMet) from methionine and ATP. The overall synthetic reaction is composed of two sequential steps, AdoMet formation and the subsequent tripolyphosphate hydrolysis which occurs prior to release of AdoMet from the enzyme. This chain is S-adenosylmethionine synthase, found in Lactiplantibacillus plantarum (strain ATCC BAA-793 / NCIMB 8826 / WCFS1) (Lactobacillus plantarum).